We begin with the raw amino-acid sequence, 345 residues long: D-fructose 1,6-bisphosphatase class 2/sedoheptulose 1,7-bisphosphatase (345 aa).

Asp33, Glu57, Asp97, and Glu100 together coordinate Mn(2+). Residues 100 to 102 (EGT), Tyr131, 176 to 178 (RPR), and 198 to 200 (DGD) each bind substrate. Glu225 is a binding site for Mn(2+).

The protein belongs to the FBPase class 2 family. As to quaternary structure, homotetramer. Mn(2+) serves as cofactor.

The catalysed reaction is beta-D-fructose 1,6-bisphosphate + H2O = beta-D-fructose 6-phosphate + phosphate. It catalyses the reaction D-sedoheptulose 1,7-bisphosphate + H2O = D-sedoheptulose 7-phosphate + phosphate. It participates in carbohydrate biosynthesis; Calvin cycle. Functionally, catalyzes the hydrolysis of fructose 1,6-bisphosphate (Fru 1,6-P2) and sedoheptulose 1,7-bisphosphate (Sed 1,7-P2) to fructose 6-phosphate and sedoheptulose 7-phosphate, respectively. The sequence is that of D-fructose 1,6-bisphosphatase class 2/sedoheptulose 1,7-bisphosphatase from Crocosphaera subtropica (strain ATCC 51142 / BH68) (Cyanothece sp. (strain ATCC 51142)).